The chain runs to 532 residues: 2,3-bisphosphoglycerate-independent phosphoglycerate mutase (532 aa).

Mn(2+)-binding residues include D15 and S65. Residue S65 is the Phosphoserine intermediate of the active site. Substrate-binding positions include H126, 156–157 (RD), R188, R194, 258–261 (RPDR), and K331. D398, H402, D439, H440, and H457 together coordinate Mn(2+).

It belongs to the BPG-independent phosphoglycerate mutase family. As to quaternary structure, monomer. Mn(2+) is required as a cofactor.

It carries out the reaction (2R)-2-phosphoglycerate = (2R)-3-phosphoglycerate. The protein operates within carbohydrate degradation; glycolysis; pyruvate from D-glyceraldehyde 3-phosphate: step 3/5. In terms of biological role, catalyzes the interconversion of 2-phosphoglycerate and 3-phosphoglycerate. The chain is 2,3-bisphosphoglycerate-independent phosphoglycerate mutase from Synechocystis sp. (strain ATCC 27184 / PCC 6803 / Kazusa).